The following is a 149-amino-acid chain: Transcriptional repressor NrdR (149 aa).

A zinc finger lies at 3–34; the sequence is CPFCSENDTKVIDSRLVADGHQVRRRRQCLAC. Residues 49–139 form the ATP-cone domain; that stretch reads PKVIKSNGNR…VYRSFEDIRE (91 aa).

It belongs to the NrdR family. Zn(2+) is required as a cofactor.

Negatively regulates transcription of bacterial ribonucleotide reductase nrd genes and operons by binding to NrdR-boxes. The chain is Transcriptional repressor NrdR from Vibrio vulnificus (strain YJ016).